The following is a 324-amino-acid chain: tRNA dimethylallyltransferase (324 aa).

15–22 (GPTATGKS) lines the ATP pocket. Substrate is bound at residue 17-22 (TATGKS). Residues 40-43 (DSAQ) form an interaction with substrate tRNA region.

Belongs to the IPP transferase family. As to quaternary structure, monomer. Requires Mg(2+) as cofactor.

The enzyme catalyses adenosine(37) in tRNA + dimethylallyl diphosphate = N(6)-dimethylallyladenosine(37) in tRNA + diphosphate. Catalyzes the transfer of a dimethylallyl group onto the adenine at position 37 in tRNAs that read codons beginning with uridine, leading to the formation of N6-(dimethylallyl)adenosine (i(6)A). This chain is tRNA dimethylallyltransferase, found in Moorella thermoacetica (strain ATCC 39073 / JCM 9320).